The primary structure comprises 119 residues: Urotensin-2B (119 aa).

The first 28 residues, 1-28 (MNKILSSTVCFGLLTLLSVLSFLQSVHG), serve as a signal peptide directing secretion. Positions 29–109 (RPYLTQGNEI…VDGLFSSHPS (81 aa)) are excised as a propeptide. An intrachain disulfide couples C113 to C118.

Belongs to the urotensin-2 family.

The protein resides in the secreted. Its function is as follows. Potent vasoconstrictor. The protein is Urotensin-2B (UTS2B) of Homo sapiens (Human).